A 415-amino-acid chain; its full sequence is Serine/threonine-protein kinase H1 homolog (415 aa).

Residues 1–70 (MGCMSSKLVP…SNRKVKKYRD (70 aa)) form a disordered region. Over residues 41 to 50 (GPRDPTKDPK) the composition is skewed to basic and acidic residues. The region spanning 80-334 (YDIKALIGRG…AADALKHQWL (255 aa)) is the Protein kinase domain. ATP-binding positions include 86–94 (IGRGNFSKV) and Lys-109. Catalysis depends on Asp-198, which acts as the Proton acceptor. Over residues 353–362 (NLIHRQSTRA) the composition is skewed to polar residues. The disordered stretch occupies residues 353–415 (NLIHRQSTRA…DVQADLASLG (63 aa)). Low complexity predominate over residues 363–385 (NSTKSAKSTRSTKSNKSNRSGRS). Basic and acidic residues predominate over residues 386 to 406 (LRSEHRRVMPDEIDELHRDPD).

This sequence belongs to the protein kinase superfamily. CAMK Ser/Thr protein kinase family.

It carries out the reaction L-seryl-[protein] + ATP = O-phospho-L-seryl-[protein] + ADP + H(+). It catalyses the reaction L-threonyl-[protein] + ATP = O-phospho-L-threonyl-[protein] + ADP + H(+). In Pinctada fucata (Akoya pearl oyster), this protein is Serine/threonine-protein kinase H1 homolog (PSKH1).